The chain runs to 458 residues: UPF0210 protein MMP1427 (458 aa).

Belongs to the UPF0210 family.

This is UPF0210 protein MMP1427 from Methanococcus maripaludis (strain DSM 14266 / JCM 13030 / NBRC 101832 / S2 / LL).